We begin with the raw amino-acid sequence, 179 residues long: Oryzines biosynthesis cluster protein J (179 aa).

The Cupin type-2 domain maps to 88–148 (YVDYHPGCEP…NHCWRNPSKT (61 aa)).

Belongs to the oryJ family.

The protein operates within secondary metabolite biosynthesis. In terms of biological role, part of the gene cluster that mediates the biosynthesis of oryzines, natural products with an unusual maleidride backbone. The two subunits of the fungal fatty acid synthase oryfasA and oryfasB probably form octenoic acid. This fatty acid is most likely activated by the acyl-CoA ligase oryP to give octenyl-CoA before the citrate synthase-like protein oryE catalyzes condensation with oxaloacetate to form tricarboxylic acid. The next steps of the pathways are conjectural, but a favorite possible route has been proposed, beginning with decarboxylation and concomitant dehydration by the decarboxylase oryM, followed by tautomerization, which may lead to the production of a diene intermediate. Reduction of this diene intermediate could give the known metabolite piliformic acid. On the pathway to oryzine B and oryzine A, however, hydroxylation of the diene by the alpha-ketoglutarate-dependent dioxygenase oryG and lactonisation by the lactonohydrolases oryH or oryL could give oryzine B directly. Finally, enoyl reduction by the dehydrogenase oryD would then convert oryzine B into oryzine A. The sequence is that of Oryzines biosynthesis cluster protein J from Aspergillus oryzae (strain ATCC 42149 / RIB 40) (Yellow koji mold).